Consider the following 535-residue polypeptide: 5,6-dihydroxyindole-2-carboxylic acid oxidase (535 aa).

An N-terminal signal peptide occupies residues methionine 1–alanine 23. Residues glutamine 24–threonine 478 lie on the Lumenal, melanosome side of the membrane. Cystine bridges form between cysteine 29–cysteine 40, cysteine 41–cysteine 64, cysteine 55–cysteine 98, cysteine 100–cysteine 109, and cysteine 112–cysteine 121. Asparagine 95 and asparagine 103 each carry an N-linked (GlcNAc...) asparagine glycan. Asparagine 180 is a glycosylation site (N-linked (GlcNAc...) asparagine). Positions 191, 214, and 223 each coordinate Zn(2+). Disulfide bonds link cysteine 257–cysteine 260 and cysteine 289–cysteine 302. Residues asparagine 303 and asparagine 349 are each glycosylated (N-linked (GlcNAc...) asparagine). Zn(2+)-binding residues include histidine 376 and histidine 380. A glycan (N-linked (GlcNAc...) asparagine) is linked at asparagine 384. Histidine 403 provides a ligand contact to Zn(2+). A helical membrane pass occupies residues isoleucine 479–valine 499. Residues arginine 500–valine 535 lie on the Cytoplasmic side of the membrane.

It belongs to the tyrosinase family. Tyrosinase, TYRP1 and TYRP2 may form a multienzyme complex. Requires Cu(2+) as cofactor. The cofactor is Zn(2+).

The protein resides in the melanosome membrane. It catalyses the reaction 2 5,6-dihydroxyindole-2-carboxylate + O2 = 2 indole-5,6-quinone-2-carboxylate + 2 H2O. It functions in the pathway pigment biosynthesis; melanin biosynthesis. Functionally, plays a role in melanin biosynthesis. Catalyzes the oxidation of 5,6-dihydroxyindole-2-carboxylic acid (DHICA) into indole-5,6-quinone-2-carboxylic acid. May regulate or influence the type of melanin synthesized. Also to a lower extent, capable of hydroxylating tyrosine and producing melanin. This chain is 5,6-dihydroxyindole-2-carboxylic acid oxidase (TYRP1), found in Gallus gallus (Chicken).